A 613-amino-acid polypeptide reads, in one-letter code: Dihydroxy-acid dehydratase (613 aa).

Asp-81 is a binding site for Mg(2+). Position 122 (Cys-122) interacts with [2Fe-2S] cluster. Mg(2+)-binding residues include Asp-123 and Lys-124. At Lys-124 the chain carries N6-carboxylysine. Cys-193 is a binding site for [2Fe-2S] cluster. Glu-489 is a binding site for Mg(2+). Catalysis depends on Ser-515, which acts as the Proton acceptor.

Belongs to the IlvD/Edd family. In terms of assembly, homodimer. Requires [2Fe-2S] cluster as cofactor. Mg(2+) serves as cofactor.

It carries out the reaction (2R)-2,3-dihydroxy-3-methylbutanoate = 3-methyl-2-oxobutanoate + H2O. The catalysed reaction is (2R,3R)-2,3-dihydroxy-3-methylpentanoate = (S)-3-methyl-2-oxopentanoate + H2O. It functions in the pathway amino-acid biosynthesis; L-isoleucine biosynthesis; L-isoleucine from 2-oxobutanoate: step 3/4. The protein operates within amino-acid biosynthesis; L-valine biosynthesis; L-valine from pyruvate: step 3/4. Its function is as follows. Functions in the biosynthesis of branched-chain amino acids. Catalyzes the dehydration of (2R,3R)-2,3-dihydroxy-3-methylpentanoate (2,3-dihydroxy-3-methylvalerate) into 2-oxo-3-methylpentanoate (2-oxo-3-methylvalerate) and of (2R)-2,3-dihydroxy-3-methylbutanoate (2,3-dihydroxyisovalerate) into 2-oxo-3-methylbutanoate (2-oxoisovalerate), the penultimate precursor to L-isoleucine and L-valine, respectively. This Pseudomonas putida (strain GB-1) protein is Dihydroxy-acid dehydratase.